The sequence spans 246 residues: 4-hydroxy-tetrahydrodipicolinate reductase (246 aa).

Position 7–12 (7–12) interacts with NAD(+); sequence GCSGRM. Residue Arg-34 coordinates NADP(+). NAD(+)-binding positions include 76–78 and 102–105; these read ATT and CPNT. Residue His-135 is the Proton donor/acceptor of the active site. His-136 provides a ligand contact to (S)-2,3,4,5-tetrahydrodipicolinate. Residue Lys-139 is the Proton donor of the active site. Position 145–146 (145–146) interacts with (S)-2,3,4,5-tetrahydrodipicolinate; sequence GT.

It belongs to the DapB family.

It localises to the cytoplasm. The catalysed reaction is (S)-2,3,4,5-tetrahydrodipicolinate + NAD(+) + H2O = (2S,4S)-4-hydroxy-2,3,4,5-tetrahydrodipicolinate + NADH + H(+). It catalyses the reaction (S)-2,3,4,5-tetrahydrodipicolinate + NADP(+) + H2O = (2S,4S)-4-hydroxy-2,3,4,5-tetrahydrodipicolinate + NADPH + H(+). It participates in amino-acid biosynthesis; L-lysine biosynthesis via DAP pathway; (S)-tetrahydrodipicolinate from L-aspartate: step 4/4. Catalyzes the conversion of 4-hydroxy-tetrahydrodipicolinate (HTPA) to tetrahydrodipicolinate. In Chlamydia abortus (strain DSM 27085 / S26/3) (Chlamydophila abortus), this protein is 4-hydroxy-tetrahydrodipicolinate reductase.